The primary structure comprises 138 residues: Transcription antitermination protein NusB (138 aa).

The protein belongs to the NusB family.

Involved in transcription antitermination. Required for transcription of ribosomal RNA (rRNA) genes. Binds specifically to the boxA antiterminator sequence of the ribosomal RNA (rrn) operons. This Photorhabdus laumondii subsp. laumondii (strain DSM 15139 / CIP 105565 / TT01) (Photorhabdus luminescens subsp. laumondii) protein is Transcription antitermination protein NusB.